We begin with the raw amino-acid sequence, 73 residues long: Large ribosomal subunit protein bL31 (73 aa).

It belongs to the bacterial ribosomal protein bL31 family. Type A subfamily. In terms of assembly, part of the 50S ribosomal subunit.

Binds the 23S rRNA. In Paracoccus denitrificans (strain Pd 1222), this protein is Large ribosomal subunit protein bL31.